We begin with the raw amino-acid sequence, 84 residues long: MKGMILFISCLLLIGIVVECKEGYLMDHEGCKLSCFIRPSGYCGSECKIKKGSSGYCAWPACYCYGLPNWVKVWDRATNKCGKK.

The N-terminal stretch at 1–20 (MKGMILFISCLLLIGIVVEC) is a signal peptide. The region spanning 21–82 (KEGYLMDHEG…VWDRATNKCG (62 aa)) is the LCN-type CS-alpha/beta domain. 4 disulfide bridges follow: C31–C81, C35–C57, C43–C62, and C47–C64. C81 carries the cysteine amide modification.

Belongs to the long (4 C-C) scorpion toxin superfamily. Sodium channel inhibitor family. Beta subfamily. As to expression, expressed by the venom gland.

Its subcellular location is the secreted. Functionally, beta toxins bind voltage-independently at site-4 of sodium channels (Nav) and shift the voltage of activation toward more negative potentials thereby affecting sodium channel activation and promoting spontaneous and repetitive firing. Is lethal to mice. In Tityus bahiensis (Brazilian scorpion), this protein is Toxin Tb1.